The chain runs to 583 residues: Ribonuclease ZC3H12A (583 aa).

Residues 1–11 (MSLWELEDRRS) show a composition bias toward basic and acidic residues. Disordered stretches follow at residues 1–29 (MSLW…EATT) and 73–119 (GSAA…GSDL). The span at 15-29 (TPRPAQEPTAEEATT) shows a compositional bias: low complexity. The ubiquitin association domain stretch occupies residues 26-71 (EATTAELQMKVDFFRKLGYSSAEIHSVLQKLGIQADTNTVLGELVK). The segment at 65–134 (VLGELVKHGS…DGSNVAMSHG (70 aa)) is necessary for interaction with TANK. Positions 73 to 82 (GSAAERERQA) are enriched in basic and acidic residues. Position 83 is a phosphoserine (S83). Positions 96 to 281 (GGGTPKAPTV…LDNFLRKKPL (186 aa)) are RNase. Positions 119–274 (LRPIVIDGSN…LGRHGPSLDN (156 aa)) constitute an RNase NYN domain. The interval 198–204 (RRVGGKR) is RNA binding. D210 lines the Mg(2+) pocket. Disordered regions lie at residues 262 to 290 (DDPL…KQPC) and 323 to 404 (ANAL…PSEW). The segment at 284 to 309 (EHKKQPCPYGRKCTYGIKCRFLHPER) adopts a C3H1-type zinc-finger fold. A necessary for interaction with ZC3H12D region spans residues 285–441 (HKKQPCPYGR…SELWGVRGGG (157 aa)). A compositionally biased stretch (low complexity) spans 341–352 (RPSPSSQPGSLP). Residues 353–364 (TEHEQCSPDRKK) are compositionally biased toward basic and acidic residues. The segment covering 384 to 393 (PTGRSLPPSG) has biased composition (low complexity). Phosphoserine is present on residues S422 and S426. The disordered stretch occupies residues 503–530 (YQLPPPTQRLQEPQAPGPGADRGPWGGA).

This sequence belongs to the ZC3H12 family. Oligomer. Found in a deubiquitination complex with TANK, USP10 and ZC3H12A; this complex inhibits genotoxic stress- or interleukin-1-beta-mediated NF-kappaB activation by promoting IKBKG or TRAF6 deubiquitination. Interacts with IKBKG; this interaction increases in response to DNA damage. Interacts with TANK; this interaction increases in response to DNA damage and serves as a bridge to anchor both TANK and USP10 into a deubiquitinating complex. Interacts with TRAF6; this interaction increases in response to DNA damage and is stimulated by TANK. Interacts with USP10; this interaction increases in response to DNA damage and serves as a bridge to anchor both TANK and USP10 into a deubiquitinating complex. Interacts with ZC3H12D. Interacts with TNRC6A. Interacts with IKBKB/IKKB. Interacts with IKBKB/IKKB. Interacts with BTRC; the interaction occurs when ZC3H12A is phosphorylated in a IKBKB/IKKB-dependent manner. Interacts with IRAK1; this interaction increases the interaction between ZC3H12A and IKBKB/IKKB. Interacts with UPF1; this interaction occurs in a mRNA translationally active- and termination-dependent manner and is essential for ZC3H12A-mediated degradation of target mRNAs. Associates with ribosomes. Interacts with ubiquitin. It depends on Mg(2+) as a cofactor. In terms of processing, phosphorylated by IRAK1; phosphorylation is necessary for subsequent phosphorylation by the I-kappa-B-kinase (IKK) complex. Phosphorylated by I-kappa-B-kinase (IKK) subunits IKBKB/IKKB and CHUK/IKKA at Ser-422 and Ser-426; these phosphorylations promote ubiquitin proteasome-mediated degradation of ZC3H12A and hence facilitates rapid and robust production of IL-6 mRNA in response to toll-like receptor (TLR) or IL-1 receptor stimuli. Post-translationally, ubiquitinated; ubiquitination is induced in response to interleukin IL1 receptor stimuli in a IKBKB/IKKB and IRAK1-dependent manner, leading to proteasome-mediated degradation. Proteolytically cleaved between Arg-95 and Arg-198 by MALT1 in activated T-cells; cleavage at Arg-95 is critical for promoting ZC3H12A degradation in response to T-cell receptor (TCR) stimulation, and hence is necessary for prolonging the stability of a set of mRNAs controlling T-cell activation and Th17 cell differentiation.

Its subcellular location is the nucleus. The protein localises to the cytoplasm. It is found in the P-body. The protein resides in the rough endoplasmic reticulum membrane. It localises to the cytoplasmic granule. Functionally, endoribonuclease involved in various biological functions such as cellular inflammatory response and immune homeostasis, glial differentiation of neuroprogenitor cells, cell death of cardiomyocytes, adipogenesis and angiogenesis. Functions as an endoribonuclease involved in mRNA decay. Modulates the inflammatory response by promoting the degradation of a set of translationally active cytokine-induced inflammation-related mRNAs, such as IL6 and IL12B, during the early phase of inflammation. Prevents aberrant T-cell-mediated immune reaction by degradation of multiple mRNAs controlling T-cell activation, such as those encoding cytokines (IL6 and IL2), cell surface receptors (ICOS, TNFRSF4 and TNFR2) and transcription factor (REL). Inhibits cooperatively with ZC3H12A the differentiation of helper T cells Th17 in lungs. They repress target mRNA encoding the Th17 cell-promoting factors IL6, ICOS, REL, IRF4, NFKBID and NFKBIZ. The cooperation requires RNA-binding by RC3H1 and the nuclease activity of ZC3H12A. Together with RC3H1, destabilizes TNFRSF4/OX40 mRNA by binding to the conserved stem loop structure in its 3'UTR. Self regulates by destabilizing its own mRNA. Cleaves mRNA harboring a stem-loop (SL), often located in their 3'-UTRs, during the early phase of inflammation in a helicase UPF1-dependent manner. Plays a role in the inhibition of microRNAs (miRNAs) biogenesis. Cleaves the terminal loop of a set of precursor miRNAs (pre-miRNAs) important for the regulation of the inflammatory response leading to their degradation, and thus preventing the biosynthesis of mature miRNAs. Also plays a role in promoting angiogenesis in response to inflammatory cytokines by inhibiting the production of antiangiogenic microRNAs via its anti-dicer RNase activity. Affects the overall ubiquitination of cellular proteins. Positively regulates deubiquitinase activity promoting the cleavage at 'Lys-48'- and 'Lys-63'-linked polyubiquitin chains on TNF receptor-associated factors (TRAFs), preventing JNK and NF-kappa-B signaling pathway activation, and hence negatively regulating macrophage-mediated inflammatory response and immune homeostasis. Also induces deubiquitination of the transcription factor HIF1A, probably leading to its stabilization and nuclear import, thereby positively regulating the expression of proangiogenic HIF1A-targeted genes. Involved in a TANK-dependent negative feedback response to attenuate NF-kappaB activation through the deubiquitination of IKBKG or TRAF6 in response to interleukin-1-beta (IL1B) stimulation or upon DNA damage. Prevents stress granules (SGs) formation and promotes macrophage apoptosis under stress conditions, including arsenite-induced oxidative stress, heat shock, and energy deprivation. Plays a role in the regulation of macrophage polarization; promotes IL4-induced polarization of macrophages M1 into anti-inflammatory M2 state. May also act as a transcription factor that regulates the expression of multiple genes involved in inflammatory response, angiogenesis, adipogenesis and apoptosis. Functions as a positive regulator of glial differentiation of neuroprogenitor cells through an amyloid precursor protein (APP)-dependent signaling pathway. Attenuates septic myocardial contractile dysfunction in response to lipopolysaccharide (LPS) by reducing I-kappa-B-kinase (IKK)-mediated NF-kappa-B activation, and hence myocardial pro-inflammatory cytokine production. The sequence is that of Ribonuclease ZC3H12A from Bos taurus (Bovine).